The sequence spans 330 residues: DNA-directed RNA polymerase subunit alpha (330 aa).

Residues 1-225 are alpha N-terminal domain (alpha-NTD); sequence MSDLAIPTIS…KQFASLVSHS (225 aa). The alpha C-terminal domain (alpha-CTD) stretch occupies residues 237–330; it reads VKYTIPEEKY…KKKNKGIDED (94 aa).

The protein belongs to the RNA polymerase alpha chain family. As to quaternary structure, homodimer. The RNAP catalytic core consists of 2 alpha, 1 beta, 1 beta' and 1 omega subunit. When a sigma factor is associated with the core the holoenzyme is formed, which can initiate transcription.

It carries out the reaction RNA(n) + a ribonucleoside 5'-triphosphate = RNA(n+1) + diphosphate. In terms of biological role, DNA-dependent RNA polymerase catalyzes the transcription of DNA into RNA using the four ribonucleoside triphosphates as substrates. The protein is DNA-directed RNA polymerase subunit alpha of Dehalococcoides mccartyi (strain CBDB1).